Consider the following 593-residue polypeptide: Cell surface glycoprotein (593 aa).

The first 22 residues, 1-22, serve as a signal peptide directing secretion; sequence MRKFTLLMLLLIVISMSGIAGA. N-linked (GalNAc...) asparagine glycosylation is found at asparagine 29, asparagine 58, asparagine 66, asparagine 74, asparagine 114, asparagine 122, asparagine 145, asparagine 148, asparagine 158, asparagine 176, asparagine 208, asparagine 231, asparagine 326, asparagine 336, asparagine 340, asparagine 431, asparagine 471, asparagine 500, and asparagine 516.

N-glycosylated; contains glycans composed of methyl-Man, Man and GalNAc residues in a molar ratio of 2:3:1.

Its subcellular location is the secreted. The protein localises to the cell wall. The protein resides in the S-layer. Functionally, the S-layer is a paracrystalline mono-layered assembly of proteins which coat the surface of the cell. The chain is Cell surface glycoprotein (slgA) from Methanothermus fervidus (strain ATCC 43054 / DSM 2088 / JCM 10308 / V24 S).